A 315-amino-acid polypeptide reads, in one-letter code: Gamma-hemolysin component C (315 aa).

The first 29 residues, 1–29 (MLKNKILTTTLSVSLLAPLANPLLENAKA), serve as a signal peptide directing secretion.

The protein belongs to the aerolysin family. In terms of assembly, toxicity requires sequential binding and synergistic association of a class S and a class F component which form heterooligomeric complexes. HlgB (class F) associates with either hlgA thus forming an AB toxin or with hlgC thus forming a CB toxin.

The protein localises to the secreted. In terms of biological role, toxin that seems to act by forming pores in the membrane of the cell. Has a hemolytic and a leucotoxic activity. This Staphylococcus aureus (strain NCTC 8325 / PS 47) protein is Gamma-hemolysin component C (hlgC).